The primary structure comprises 140 residues: Nucleoside diphosphate kinase (140 aa).

ATP is bound by residues lysine 11, phenylalanine 59, arginine 87, threonine 93, arginine 104, and asparagine 114. The active-site Pros-phosphohistidine intermediate is the histidine 117.

Belongs to the NDK family. Homotetramer. Mg(2+) serves as cofactor.

It is found in the cytoplasm. The enzyme catalyses a 2'-deoxyribonucleoside 5'-diphosphate + ATP = a 2'-deoxyribonucleoside 5'-triphosphate + ADP. It carries out the reaction a ribonucleoside 5'-diphosphate + ATP = a ribonucleoside 5'-triphosphate + ADP. Major role in the synthesis of nucleoside triphosphates other than ATP. The ATP gamma phosphate is transferred to the NDP beta phosphate via a ping-pong mechanism, using a phosphorylated active-site intermediate. This is Nucleoside diphosphate kinase from Methylobacterium sp. (strain 4-46).